Here is a 466-residue protein sequence, read N- to C-terminus: MSIASVASVFKGEHAVGSTVTVRGWVRTRRDSKAGISFLAVYDGSCFNPIQGVVPSSLENYDNEVLKLTAGCSVIVTGEIVESPGAGQAYELQVTHVEVTGWVEDPDTYPMAAKRHSIEHLRELAHLRPRTNIIGAVARVRNCLSQAIHRFYHENGFVWVSTPLITASDCEGAGEMFRVSTLDMENLPRTSDGKVDYDKDFFGKEAFLTVSGQLNGETYACALSKIYTFGPTFRAENSNTSRHLAEFWMVEPEVAFATLSDIASLAEGMLKYAFDAVLAERMDDLQFFAQHVDKTVIERLQSFVSSDFAQVDYTDAVEILQKCGREFEFPVSWGIDLSSEHERYLAEEHFKAPVVVKNYPKDIKAFYMRLNEDGKTVAAMDVLAPGIGEIIGGSQREERLDVLDMRLEEMDLNKEDYWWYRDLRRYGTVPHAGFGLGFERLVSYVTGVSNIRDVIPFPRAPRTANF.

The protein belongs to the class-II aminoacyl-tRNA synthetase family. In terms of assembly, homodimer.

It is found in the cytoplasm. It carries out the reaction tRNA(Asn) + L-asparagine + ATP = L-asparaginyl-tRNA(Asn) + AMP + diphosphate + H(+). This is Asparagine--tRNA ligase from Shewanella sp. (strain MR-7).